Reading from the N-terminus, the 157-residue chain is DNA gyrase inhibitor (157 aa).

It belongs to the DNA gyrase inhibitor family. As to quaternary structure, interacts with DNA gyrase.

It localises to the cytoplasm. Inhibits the supercoiling activity of DNA gyrase. Acts by inhibiting DNA gyrase at an early step, prior to (or at the step of) binding of DNA by the gyrase. It protects cells against toxins that target DNA gyrase, by inhibiting activity of these toxins and reducing the formation of lethal double-strand breaks in the cell. This Yersinia enterocolitica serotype O:8 / biotype 1B (strain NCTC 13174 / 8081) protein is DNA gyrase inhibitor.